We begin with the raw amino-acid sequence, 272 residues long: Ethanolamine ammonia-lyase small subunit (272 aa).

Adenosylcob(III)alamin is bound by residues V161, E182, and C211.

This sequence belongs to the EutC family. As to quaternary structure, the basic unit is a heterodimer which dimerizes to form tetramers. The heterotetramers trimerize; 6 large subunits form a core ring with 6 small subunits projecting outwards. Adenosylcob(III)alamin is required as a cofactor.

Its subcellular location is the bacterial microcompartment. It carries out the reaction ethanolamine = acetaldehyde + NH4(+). It functions in the pathway amine and polyamine degradation; ethanolamine degradation. Its function is as follows. Catalyzes the deamination of various vicinal amino-alcohols to oxo compounds. Allows this organism to utilize ethanolamine as the sole source of nitrogen and carbon in the presence of external vitamin B12. The polypeptide is Ethanolamine ammonia-lyase small subunit (Pseudomonas putida (strain ATCC 700007 / DSM 6899 / JCM 31910 / BCRC 17059 / LMG 24140 / F1)).